The following is a 556-amino-acid chain: Formate--tetrahydrofolate ligase 1 (556 aa).

65-72 (TPAGEGKS) contributes to the ATP binding site.

The protein belongs to the formate--tetrahydrofolate ligase family.

The enzyme catalyses (6S)-5,6,7,8-tetrahydrofolate + formate + ATP = (6R)-10-formyltetrahydrofolate + ADP + phosphate. The protein operates within one-carbon metabolism; tetrahydrofolate interconversion. This Streptococcus pyogenes serotype M2 (strain MGAS10270) protein is Formate--tetrahydrofolate ligase 1.